The chain runs to 360 residues: Peptide chain release factor 1 (360 aa).

Q235 bears the N5-methylglutamine mark.

Belongs to the prokaryotic/mitochondrial release factor family. In terms of processing, methylated by PrmC. Methylation increases the termination efficiency of RF1.

The protein localises to the cytoplasm. Peptide chain release factor 1 directs the termination of translation in response to the peptide chain termination codons UAG and UAA. This Burkholderia ambifaria (strain MC40-6) protein is Peptide chain release factor 1.